A 704-amino-acid polypeptide reads, in one-letter code: Elongation factor G (704 aa).

Residues 8–290 (ARYRNIGISA…AVIDYLPAPT (283 aa)) enclose the tr-type G domain. Residues 17–24 (AHIDAGKT), 88–92 (DTPGH), and 142–145 (NKMD) contribute to the GTP site.

This sequence belongs to the TRAFAC class translation factor GTPase superfamily. Classic translation factor GTPase family. EF-G/EF-2 subfamily.

Its subcellular location is the cytoplasm. Catalyzes the GTP-dependent ribosomal translocation step during translation elongation. During this step, the ribosome changes from the pre-translocational (PRE) to the post-translocational (POST) state as the newly formed A-site-bound peptidyl-tRNA and P-site-bound deacylated tRNA move to the P and E sites, respectively. Catalyzes the coordinated movement of the two tRNA molecules, the mRNA and conformational changes in the ribosome. The sequence is that of Elongation factor G from Pectobacterium atrosepticum (strain SCRI 1043 / ATCC BAA-672) (Erwinia carotovora subsp. atroseptica).